Here is a 1301-residue protein sequence, read N- to C-terminus: Tyrosine-protein phosphatase 99A (1301 aa).

A signal peptide spans 1-28 (MPRPQHHALLRAMLKLLLFASIAEHCAT). The Extracellular segment spans residues 29–394 (ALPTNSSNSP…RQSHNDYNLA (366 aa)). Residues 31–63 (PTNSSNSPSSPSPFTVASLPPTTASSSSSPAVI) form a disordered region. Asn-33 carries an N-linked (GlcNAc...) asparagine glycan. The segment covering 33–63 (NSSNSPSSPSPFTVASLPPTTASSSSSPAVI) has biased composition (low complexity). Fibronectin type-III domains follow at residues 66–165 (SSFD…YAAV), 173–269 (KPQN…TDVG), and 270–376 (GPSA…LQPN). Asn-176, Asn-212, Asn-278, Asn-322, and Asn-336 each carry an N-linked (GlcNAc...) asparagine glycan. A helical membrane pass occupies residues 395-415 (VLVGIIFSCFGIILIIMAFFL). The Cytoplasmic segment spans residues 416–1301 (WSRKCFHAAY…TDAQNLDIVG (886 aa)). Tyrosine-protein phosphatase domains are found at residues 476 to 741 (FSRE…LVEA) and 764 to 1016 (LEQQ…LSFL). Residue Cys-682 is the Phosphocysteine intermediate of the active site. The span at 1092 to 1106 (TALNETVSTPSTDTN) shows a compositional bias: polar residues. Disordered stretches follow at residues 1092-1199 (TALN…PTIP) and 1257-1281 (VGDL…NNHI). Over residues 1107–1130 (PSLLPILSLLPPTVAPLSSSSSTT) the composition is skewed to low complexity. Residues 1131–1142 (PPTPSTPTPQPP) show a composition bias toward pro residues. A compositionally biased stretch (polar residues) spans 1150–1161 (HSPSDLSHQISS). Positions 1162–1188 (TVANAASPVTPATASASAGATPTTPMT) are enriched in low complexity. Over residues 1264 to 1273 (NADNSPTASP) the composition is skewed to polar residues.

This sequence belongs to the protein-tyrosine phosphatase family. Receptor class subfamily. Selectively expressed in a subset of axons and pioneer neurons (including aCC and RP2) in the embryo.

The protein resides in the membrane. The enzyme catalyses O-phospho-L-tyrosyl-[protein] + H2O = L-tyrosyl-[protein] + phosphate. May play a key role in signal transduction and growth control. May have a role in the establishment of the intersegmental and segmental nerves. The sequence is that of Tyrosine-protein phosphatase 99A (Ptp99A) from Drosophila melanogaster (Fruit fly).